A 225-amino-acid polypeptide reads, in one-letter code: 2-C-methyl-D-erythritol 4-phosphate cytidylyltransferase (225 aa).

It belongs to the IspD/TarI cytidylyltransferase family. IspD subfamily.

It catalyses the reaction 2-C-methyl-D-erythritol 4-phosphate + CTP + H(+) = 4-CDP-2-C-methyl-D-erythritol + diphosphate. It participates in isoprenoid biosynthesis; isopentenyl diphosphate biosynthesis via DXP pathway; isopentenyl diphosphate from 1-deoxy-D-xylulose 5-phosphate: step 2/6. Functionally, catalyzes the formation of 4-diphosphocytidyl-2-C-methyl-D-erythritol from CTP and 2-C-methyl-D-erythritol 4-phosphate (MEP). The sequence is that of 2-C-methyl-D-erythritol 4-phosphate cytidylyltransferase from Chromobacterium violaceum (strain ATCC 12472 / DSM 30191 / JCM 1249 / CCUG 213 / NBRC 12614 / NCIMB 9131 / NCTC 9757 / MK).